We begin with the raw amino-acid sequence, 70 residues long: MNHICDICKEYISGKTICLRISDEKTYVDFNCCESCAKGYSDKVKNECSNLSVKKTLEHLGLNIKYKIRG.

The chain is SPbeta prophage-derived uncharacterized protein YorZ (yorZ) from Bacillus subtilis (strain 168).